A 169-amino-acid chain; its full sequence is Keratin-associated protein 9-7 (169 aa).

Repeat copies occupy residues 8–12 (CCQPT), 13–17 (CCRTT), 32–36 (CCQPS), 37–41 (CCVSS), 46–50 (CCHPT), 51–55 (CCQNT), 56–60 (CCRTT), 61–65 (CCQPT), 75–79 (CCSTP), 80–84 (CCQPI), 85–89 (CCGSS), 90–94 (CCGQT), 100–104 (CCQPS), 139–143 (CCRPA), 144–148 (CCETT), 149–153 (CCRTT), and 163–167 (CCQPA). The segment at 8 to 167 (CCQPTCCRTT…TCVTSCCQPA (160 aa)) is 17 X 5 AA repeats of C-C-[VGSREQH]-[SQTPN]-[STPAI].

This sequence belongs to the KRTAP type 9 family. In terms of assembly, interacts with hair keratins.

In the hair cortex, hair keratin intermediate filaments are embedded in an interfilamentous matrix, consisting of hair keratin-associated proteins (KRTAP), which are essential for the formation of a rigid and resistant hair shaft through their extensive disulfide bond cross-linking with abundant cysteine residues of hair keratins. The matrix proteins include the high-sulfur and high-glycine-tyrosine keratins. The polypeptide is Keratin-associated protein 9-7 (Homo sapiens (Human)).